The following is a 651-amino-acid chain: Ion-translocating oxidoreductase complex subunit C (651 aa).

2 consecutive 4Fe-4S ferredoxin-type domains span residues 368–398 (EYAE…QQLY) and 408–437 (KSEE…IQYF). [4Fe-4S] cluster-binding residues include Cys-378, Cys-381, Cys-384, Cys-388, Cys-417, Cys-420, Cys-423, and Cys-427. Composition is skewed to basic and acidic residues over residues 465 to 477 (QARM…ERKA) and 485 to 513 (ARRE…KANE). Disordered stretches follow at residues 465 to 565 (QARM…QPTD) and 583 to 624 (LAQA…DPKK). Polar residues-rich tracts occupy residues 554 to 564 (VENQEQQTQPT) and 587 to 600 (NSTS…QTAE). The span at 602–614 (EVEKTKSAVEKTQ) shows a compositional bias: basic and acidic residues.

It belongs to the 4Fe4S bacterial-type ferredoxin family. RnfC subfamily. As to quaternary structure, the complex is composed of six subunits: RnfA, RnfB, RnfC, RnfD, RnfE and RnfG. The cofactor is [4Fe-4S] cluster.

It localises to the cell inner membrane. Functionally, part of a membrane-bound complex that couples electron transfer with translocation of ions across the membrane. This is Ion-translocating oxidoreductase complex subunit C from Haemophilus influenzae (strain PittEE).